We begin with the raw amino-acid sequence, 188 residues long: Putative manganese efflux pump MntP (188 aa).

A run of 6 helical transmembrane segments spans residues 2–22 (LYIEVLLLAIGLSMDSLAVSV), 40–60 (IASVLGIFQAGMTVIGYTMGL), 66–86 (ICAFDHWIAFTLLLYLGGKMI), 107–127 (LCGLGIATSIDALAVGISLAI), 133–153 (LLQASTIGVVTFAISAFGVYF), and 167–187 (LIGGLILIGIGTKILIEHLFF).

The protein belongs to the MntP (TC 9.B.29) family.

It localises to the cell inner membrane. In terms of biological role, probably functions as a manganese efflux pump. The chain is Putative manganese efflux pump MntP from Parabacteroides distasonis (strain ATCC 8503 / DSM 20701 / CIP 104284 / JCM 5825 / NCTC 11152).